Consider the following 231-residue polypeptide: Dephospho-CoA kinase domain-containing protein (231 aa).

Positions 3–207 (LVGLTGGIAS…RSLEYLPLRF (205 aa)) constitute a DPCK domain. Position 8–15 (8–15 (GGIASGKS)) interacts with ATP.

Belongs to the CoaE family.

This Homo sapiens (Human) protein is Dephospho-CoA kinase domain-containing protein (DCAKD).